A 314-amino-acid chain; its full sequence is HTH-type transcriptional regulator LeuO (314 aa).

Positions 22-79 (VDLNLLTVFDAVMQEQNITRAAHVLGMSQPAVSNAVARLKVMFNDELFVRYGRGIQPT) constitute an HTH lysR-type domain. Positions 39–58 (ITRAAHVLGMSQPAVSNAVA) form a DNA-binding region, H-T-H motif.

This sequence belongs to the LysR transcriptional regulatory family.

In terms of biological role, a global transcription factor. Activates transcription of the 9 following operons; yjjQ-bglJ, yjjP, acrEF, ybdO, yjcRQP, casABCDE12, rhsD-ybbC, fepE and gltF, in most cases it probably interferes with silencing by H-NS and activates transcription. Represses transcription of the 3 following operons; uxaCA, sdaCB and btsT. H-NS repression of the bgl operon, leading to the ability to metabolize some beta-glucosides. It also directly activates the bgl operon. Activation is H-NS and BglJ-RcsB independent. The sequence is that of HTH-type transcriptional regulator LeuO (leuO) from Escherichia coli (strain K12).